The primary structure comprises 64 residues: DNA-directed RNA polymerase subunit Rpo10 (64 aa).

Residues Cys7, Cys10, Cys45, and Cys46 each coordinate Zn(2+).

Belongs to the archaeal Rpo10/eukaryotic RPB10 RNA polymerase subunit family. Part of the RNA polymerase complex. Requires Zn(2+) as cofactor.

The protein localises to the cytoplasm. The catalysed reaction is RNA(n) + a ribonucleoside 5'-triphosphate = RNA(n+1) + diphosphate. In terms of biological role, DNA-dependent RNA polymerase (RNAP) catalyzes the transcription of DNA into RNA using the four ribonucleoside triphosphates as substrates. The sequence is that of DNA-directed RNA polymerase subunit Rpo10 from Halorubrum lacusprofundi (strain ATCC 49239 / DSM 5036 / JCM 8891 / ACAM 34).